We begin with the raw amino-acid sequence, 138 residues long: MITFFEKLSTFCHNLTPTECKVSVISFFLLAFLLMAHIWLSWFSNNQHCLRTMRHLEKLKIPYEFQYGWLGVKITIKSNVPNDEVTKKVSPIIKGEIEGKEEKKEGKGEIEGKEEKKEGKGEIEGKEEKKEVENGPRK.

A helical transmembrane segment spans residues 19 to 40; it reads ECKVSVISFFLLAFLLMAHIWL. 3 consecutive repeat copies span residues 94-106, 107-119, and 120-132. A 3 X 13 AA tandem repeats of K-G-E-I-E-G-K-E-E-K-K-E-[GV] region spans residues 94 to 132; it reads KGEIEGKEEKKEGKGEIEGKEEKKEGKGEIEGKEEKKEV. The interval 98–138 is disordered; the sequence is EGKEEKKEGKGEIEGKEEKKEGKGEIEGKEEKKEVENGPRK.

As to expression, expressed in roots, leaves and flowers.

The protein localises to the mitochondrion membrane. Functionally, involved in cytoplasmic male sterility (CMS) by leading to pollen abortion. Not expressed in fertile (normal) plants. This is an uncharacterized protein from Raphanus sativus (Radish).